We begin with the raw amino-acid sequence, 59 residues long: Large ribosomal subunit protein bL32 (59 aa).

The segment covering 1–16 has biased composition (basic residues); sequence MAVPKRKTSPSKRGMR. The interval 1 to 59 is disordered; the sequence is MAVPKRKTSPSKRGMRRSADALKAPTYIEDKNSGELRRPHHIDLKTGMYRGRSVLPPKD. A compositionally biased stretch (basic and acidic residues) spans 28-44; the sequence is IEDKNSGELRRPHHIDL.

The protein belongs to the bacterial ribosomal protein bL32 family.

The protein is Large ribosomal subunit protein bL32 of Bartonella quintana (strain Toulouse) (Rochalimaea quintana).